Reading from the N-terminus, the 390-residue chain is Queuine tRNA-ribosyltransferase (390 aa).

The Proton acceptor role is filled by aspartate 90. Residues 90–94 (DSGGF), aspartate 144, glutamine 197, and glycine 224 contribute to the substrate site. The tract at residues 255-261 (GVGTPED) is RNA binding. Residue aspartate 274 is the Nucleophile of the active site. Residues 279-283 (TRNAR) form an RNA binding; important for wobble base 34 recognition region. Cysteine 312, cysteine 314, cysteine 317, and histidine 354 together coordinate Zn(2+).

Belongs to the queuine tRNA-ribosyltransferase family. In terms of assembly, homodimer. Within each dimer, one monomer is responsible for RNA recognition and catalysis, while the other monomer binds to the replacement base PreQ1. Zn(2+) serves as cofactor.

It carries out the reaction 7-aminomethyl-7-carbaguanine + guanosine(34) in tRNA = 7-aminomethyl-7-carbaguanosine(34) in tRNA + guanine. The protein operates within tRNA modification; tRNA-queuosine biosynthesis. In terms of biological role, catalyzes the base-exchange of a guanine (G) residue with the queuine precursor 7-aminomethyl-7-deazaguanine (PreQ1) at position 34 (anticodon wobble position) in tRNAs with GU(N) anticodons (tRNA-Asp, -Asn, -His and -Tyr). Catalysis occurs through a double-displacement mechanism. The nucleophile active site attacks the C1' of nucleotide 34 to detach the guanine base from the RNA, forming a covalent enzyme-RNA intermediate. The proton acceptor active site deprotonates the incoming PreQ1, allowing a nucleophilic attack on the C1' of the ribose to form the product. After dissociation, two additional enzymatic reactions on the tRNA convert PreQ1 to queuine (Q), resulting in the hypermodified nucleoside queuosine (7-(((4,5-cis-dihydroxy-2-cyclopenten-1-yl)amino)methyl)-7-deazaguanosine). In Leptothrix cholodnii (strain ATCC 51168 / LMG 8142 / SP-6) (Leptothrix discophora (strain SP-6)), this protein is Queuine tRNA-ribosyltransferase.